The sequence spans 171 residues: Protein phosphatase 1 regulatory subunit 1A (171 aa).

Met1 bears the N-acetylmethionine mark. A disordered region spans residues 1–171 (MEPDNSPRKI…PLDSQGASLV (171 aa)). An essential for activity region spans residues 9-12 (KIQF). A compositionally biased stretch (basic and acidic residues) spans 19–29 (PHLDPEAAEQI). Residue Thr35 is modified to Phosphothreonine. An essential for activity region spans residues 42-54 (TSDQSSPEIDEDR). 4 positions are modified to phosphoserine: Ser43, Ser46, Ser47, and Ser67. The span at 122-146 (GSASRPDTPGTAQKSAESNPKTQEQ) shows a compositional bias: polar residues. An interaction with PPP1R15A region spans residues 143–171 (TQEQCGVEPRTEDSSAHMLPLDSQGASLV).

Belongs to the protein phosphatase inhibitor 1 family. As to quaternary structure, interacts with PPP1R15A. In terms of processing, phosphorylation of Thr-35 is required for activity.

Inhibitor of protein-phosphatase 1. This protein may be important in hormonal control of glycogen metabolism. Hormones that elevate intracellular cAMP increase I-1 activity in many tissues. I-1 activation may impose cAMP control over proteins that are not directly phosphorylated by PKA. Following a rise in intracellular calcium, I-1 is inactivated by calcineurin (or PP2B). Does not inhibit type-2 phosphatases. In Mus musculus (Mouse), this protein is Protein phosphatase 1 regulatory subunit 1A (Ppp1r1a).